The chain runs to 132 residues: Small ribosomal subunit protein uS8 (132 aa).

The protein belongs to the universal ribosomal protein uS8 family. Part of the 30S ribosomal subunit. Contacts proteins S5 and S12.

In terms of biological role, one of the primary rRNA binding proteins, it binds directly to 16S rRNA central domain where it helps coordinate assembly of the platform of the 30S subunit. This is Small ribosomal subunit protein uS8 from Streptococcus pyogenes serotype M49 (strain NZ131).